Reading from the N-terminus, the 224-residue chain is Ribonuclease HII (224 aa).

The 211-residue stretch at 7–217 (STIMGIDEAG…SNAVIADCLQ (211 aa)) folds into the RNase H type-2 domain. A divalent metal cation-binding residues include Asp-13, Glu-14, and Asp-111.

It belongs to the RNase HII family. Mn(2+) serves as cofactor. The cofactor is Mg(2+).

It is found in the cytoplasm. The enzyme catalyses Endonucleolytic cleavage to 5'-phosphomonoester.. Endonuclease that specifically degrades the RNA of RNA-DNA hybrids. This Methanocella arvoryzae (strain DSM 22066 / NBRC 105507 / MRE50) protein is Ribonuclease HII.